Here is a 1811-residue protein sequence, read N- to C-terminus: ADP-ribosylation factor guanine nucleotide-exchange factor sec71 (1811 aa).

Disordered stretches follow at residues 1–108 (MTDL…TSEA) and 316–336 (INMN…PIPS). Basic and acidic residues-rich tracts occupy residues 33–49 (STIK…HDSI), 57–73 (KSIE…KDIE), and 80–91 (PPEDDLDSRSIE). Serine 40 bears the Phosphoserine mark. Composition is skewed to polar residues over residues 92–108 (SEQT…TSEA) and 316–326 (INMNKSSSNGT). Threonine 326 carries the phosphothreonine modification. Residues serine 332 and serine 353 each carry the phosphoserine modification. The short motif at 533-537 (NYDCI) is the HUS box element. The segment covering 643–663 (TAKDDETESTSKGEEPQKSKS) has biased composition (basic and acidic residues). Residues 643-688 (TAKDDETESTSKGEEPQKSKSEPPSAGINSTSMDNLESSGQALATD) are disordered. Positions 669 to 688 (GINSTSMDNLESSGQALATD) are enriched in polar residues. The SEC7 domain occupies 692 to 880 (QFENLKHRKK…TEVYEEIQKN (189 aa)). Serine 741 is subject to Phosphoserine. Position 742 is a phosphothreonine (threonine 742). Residue aspartate 812 coordinates Mg(2+). Residues 889-1103 (DPTSNFPEIP…TTKPLRKSLD (215 aa)) form an HDS1 domain region.

Its subcellular location is the cytoplasm. The protein resides in the golgi apparatus. It is found in the trans-Golgi network. It localises to the cytoplasmic vesicle. The protein localises to the COPI-coated vesicle membrane. Its subcellular location is the COPII-coated vesicle membrane. In terms of biological role, guanine exchange factor that acts as an activator of arf1 at the trans-Golgi net-work and is thus involved in vesicular budding and traffic between compartments of the Golgi apparatus. Activation of Arf (ADP-ribosylation factor) GTPases is essential for vesicle formation via recruitment of cargo adapters and coat proteins necessary for Golgi trafficking. Involved in tunicamycin-induced ER stress response and subsequent apoptosis. The polypeptide is ADP-ribosylation factor guanine nucleotide-exchange factor sec71 (Schizosaccharomyces pombe (strain 972 / ATCC 24843) (Fission yeast)).